The sequence spans 166 residues: Small ribosomal subunit protein uS9 (166 aa).

Residues 135 to 166 (KKAGFLTRDPRATERKKYGLKKARKAPQYSKR) are disordered. The span at 142–151 (RDPRATERKK) shows a compositional bias: basic and acidic residues. Over residues 152–166 (YGLKKARKAPQYSKR) the composition is skewed to basic residues.

This sequence belongs to the universal ribosomal protein uS9 family.

The sequence is that of Small ribosomal subunit protein uS9 from Mycobacterium avium (strain 104).